The primary structure comprises 323 residues: Protoheme IX farnesyltransferase (323 aa).

8 helical membrane passes run 28 to 48, 50 to 70, 101 to 121, 122 to 142, 150 to 170, 178 to 198, 235 to 255, and 282 to 302; these read IIPL…EGRV, LFTL…AQVM, FIFA…FVNL, LSGL…THLL, IVIG…AVTG, ILFA…ALMI, FLLV…AIIL, and FSIF…LPLT.

This sequence belongs to the UbiA prenyltransferase family. Protoheme IX farnesyltransferase subfamily.

Its subcellular location is the cell inner membrane. The catalysed reaction is heme b + (2E,6E)-farnesyl diphosphate + H2O = Fe(II)-heme o + diphosphate. It participates in porphyrin-containing compound metabolism; heme O biosynthesis; heme O from protoheme: step 1/1. Converts heme B (protoheme IX) to heme O by substitution of the vinyl group on carbon 2 of heme B porphyrin ring with a hydroxyethyl farnesyl side group. In Rippkaea orientalis (strain PCC 8801 / RF-1) (Cyanothece sp. (strain PCC 8801)), this protein is Protoheme IX farnesyltransferase.